An 80-amino-acid chain; its full sequence is UPF0154 protein SZO_03240 (80 aa).

Residues 4-24 traverse the membrane as a helical segment; that stretch reads AIWILLIIVALTAGLFGGIFI.

The protein belongs to the UPF0154 family.

It is found in the cell membrane. This chain is UPF0154 protein SZO_03240, found in Streptococcus equi subsp. zooepidemicus (strain H70).